The chain runs to 248 residues: Adenylate kinase (248 aa).

Residue G37 to T42 participates in ATP binding. The tract at residues S57–V86 is NMP. AMP contacts are provided by residues R63, Q84–V86, G111–R114, and Q118. The interval G149 to D181 is LID. R150 contacts ATP. The AMP site is built by R178 and R189.

This sequence belongs to the adenylate kinase family. As to quaternary structure, monomer.

Its subcellular location is the cytoplasm. The catalysed reaction is AMP + ATP = 2 ADP. In terms of biological role, catalyzes the reversible transfer of the terminal phosphate group between ATP and AMP. Plays an important role in cellular energy homeostasis and in adenine nucleotide metabolism. This is Adenylate kinase from Giardia intestinalis (Giardia lamblia).